The sequence spans 474 residues: Glutamate--tRNA ligase (474 aa).

A 'HIGH' region motif is present at residues 11–21 (PSPTGFLHIGG). The short motif at 240-244 (KLSKR) is the 'KMSKS' region element. Position 243 (Lys-243) interacts with ATP.

The protein belongs to the class-I aminoacyl-tRNA synthetase family. Glutamate--tRNA ligase type 1 subfamily. In terms of assembly, monomer.

The protein resides in the cytoplasm. The enzyme catalyses tRNA(Glu) + L-glutamate + ATP = L-glutamyl-tRNA(Glu) + AMP + diphosphate. In terms of biological role, catalyzes the attachment of glutamate to tRNA(Glu) in a two-step reaction: glutamate is first activated by ATP to form Glu-AMP and then transferred to the acceptor end of tRNA(Glu). In Bradyrhizobium sp. (strain BTAi1 / ATCC BAA-1182), this protein is Glutamate--tRNA ligase.